The sequence spans 839 residues: RNA-directed RNA polymerase (839 aa).

A RdRp catalytic domain is found at 504-619 (PVCVGLDASR…IMDQEHLAKF (116 aa)).

The enzyme catalyses RNA(n) + a ribonucleoside 5'-triphosphate = RNA(n+1) + diphosphate. RNA-dependent RNA polymerase replicates the viral genome. This Groundnut rosette virus (strain MC1) (GRV) protein is RNA-directed RNA polymerase.